The chain runs to 365 residues: GTPase Obg (365 aa).

Residues 1–159 form the Obg domain; it reads MKFIDEARIE…RMLKLELKVL (159 aa). Residues 160–334 enclose the OBG-type G domain; the sequence is ADVGLLGMPN…LIYAIKDHLQ (175 aa). Residues 166–173, 191–195, 213–216, 284–287, and 315–317 each bind GTP; these read GMPNAGKS, FTTLH, DIPG, NKLD, and SAL. Ser-173 and Thr-193 together coordinate Mg(2+).

Belongs to the TRAFAC class OBG-HflX-like GTPase superfamily. OBG GTPase family. As to quaternary structure, monomer. Mg(2+) serves as cofactor.

The protein localises to the cytoplasm. Functionally, an essential GTPase which binds GTP, GDP and possibly (p)ppGpp with moderate affinity, with high nucleotide exchange rates and a fairly low GTP hydrolysis rate. Plays a role in control of the cell cycle, stress response, ribosome biogenesis and in those bacteria that undergo differentiation, in morphogenesis control. This is GTPase Obg from Cupriavidus taiwanensis (strain DSM 17343 / BCRC 17206 / CCUG 44338 / CIP 107171 / LMG 19424 / R1) (Ralstonia taiwanensis (strain LMG 19424)).